We begin with the raw amino-acid sequence, 3573 residues long: Zinc finger homeobox protein 4 (3573 aa).

Residues 1-28 are compositionally biased toward polar residues; it reads METCDSPTISRQENGQSTSKLCGTTQLD. Disordered stretches follow at residues 1 to 54, 425 to 479, and 522 to 606; these read METC…LRTD, LSHS…DTYS, and TSSS…GSPG. 2 stretches are compositionally biased toward basic and acidic residues: residues 39 to 54 and 434 to 452; these read EPDRENSSTDDNLRTD and KLSESKDQENNCERQKETN. A compositionally biased stretch (acidic residues) spans 468–479; sequence EPVEEEDEDTYS. A compositionally biased stretch (polar residues) spans 585 to 599; it reads SVTPHQHSFTPSTPS. 3 C2H2-type zinc fingers span residues 609 to 632, 640 to 663, and 695 to 719; these read IECPKCDTVLGSSRSLGGHMTMMH, LKCPKCNWHYKYQQTLEAHMKEKH, and FRCEVCNYSTTTKGNLSIHMQSDKH. The C2H2-type 4; degenerate zinc finger occupies 763 to 785; the sequence is WRCEVCDYETNVARNLRIHMTSE. 3 C2H2-type zinc fingers span residues 913–937, 969–991, and 1017–1041; these read YQCKLCNYNTQLKANFQLHCKTDKH, LKCNACDYYTNSVDKLRLHTTNH, and YYCALCDYSTKVKLNLVQHVRSVKH. Positions 1096 to 1132 are disordered; sequence GEDTEGSAKSTSVAIGDDKDSSERDNTEAKKSSKDSV. Residues 1111–1129 are compositionally biased toward basic and acidic residues; the sequence is GDDKDSSERDNTEAKKSSK. C2H2-type zinc fingers lie at residues 1168–1191 and 1197–1220; these read YQCPYCNYNSRDPNRIQMHVLSQH and ICCPLCQDVLSNKMHLQLHLTHLH. The interval 1250 to 1340 is disordered; that stretch reads AASEKSERDT…EQQKKQQLSV (91 aa). Basic and acidic residues predominate over residues 1277 to 1306; the sequence is VDEKSTPGTDESKPGMEIKSEEQKPPKESA. The segment covering 1322-1340 has biased composition (polar residues); that stretch reads TDSMPDQLNEQQKKQQLSV. 2 C2H2-type zinc fingers span residues 1348–1370 and 1376–1399; these read YRCNHCSLAFKTMQKLQIHSQYH and TMCSLCQRSFRTFQALKKHLEAGH. Positions 1442 to 1476 are disordered; sequence YEMEQEGKASPVGSDSSSIPDDMGSEPKRTLPFRK. 2 C2H2-type zinc fingers span residues 1492–1518 and 1544–1568; these read YKCTVCKESFTQKNILLVHYNSVSHLH and YKCSICNVAYSQSSTLEIHMRSVLH. Disordered stretches follow at residues 1577–1596 and 1795–1843; these read LEPSGNISSGNSVAGNVNSP and YKES…IASG. Positions 1580 to 1596 are enriched in low complexity; that stretch reads SGNISSGNSVAGNVNSP. A compositionally biased stretch (basic and acidic residues) spans 1795 to 1830; sequence YKESEEISEKQEKPKQEFTNESEGLKENKDMKKPKS. The C2H2-type 14 zinc finger occupies 1886 to 1909; sequence LECGTCSKLFSNILILKSHQEHVH. Positions 1933-2013 are disordered; that stretch reads YPISPSSPET…PSAPPQVQLP (81 aa). Pro residues-rich tracts occupy residues 1940-1962 and 1980-2007; these read PETPPPPPPPPPPPPPPPPPTPS and LQAPPPTPPPPPPPPPPPPPPPPPPSAP. 2 DNA-binding regions (homeobox) span residues 2072 to 2131 and 2169 to 2228; these read FKRP…RQRN and KRSS…RKSY. The C2H2-type 15; degenerate zinc-finger motif lies at 2255–2279; it reads YQCKKCSVVFPRIFDLITHQKKQCY. Disordered regions lie at residues 2278 to 2300 and 2318 to 2426; these read CYKDEDDDAQDESQTEDSMDASD and SLAV…TPLQ. The span at 2281 to 2297 shows a compositional bias: acidic residues; the sequence is DEDDDAQDESQTEDSMD. The span at 2318–2334 shows a compositional bias: low complexity; that stretch reads SLAVTAASSGSGSSTPL. The segment covering 2340 to 2357 has biased composition (basic and acidic residues); that stretch reads PEPEKASPKSESTEKPKP. Composition is skewed to low complexity over residues 2360-2373 and 2382-2413; these read TISKQTDTTSQSSK and PSDPQPSASQPQQQKQSQIIGRPPSTSQTTPV. The segment at 2436-2458 adopts a C2H2-type 16 zinc-finger fold; the sequence is YQCDQCTVAFPTLELWQEHQHMH. Residues 2499 to 2509 are compositionally biased toward polar residues; sequence LAQMPPQTGSS. The segment at 2499–2553 is disordered; sequence LAQMPPQTGSSHAAHPATVSGSMKRKLDDKEDNNCSEKEGGNSGEDQHRDKRLRT. Residues 2523 to 2547 show a composition bias toward basic and acidic residues; that stretch reads RKLDDKEDNNCSEKEGGNSGEDQHR. The segment at residues 2548 to 2607 is a DNA-binding region (homeobox 3); it reads DKRLRTTITPEQLEILYEKYLLDSNPTRKMLDHIAREVGLKKRVVQVWFQNTRARERKGQ. The C2H2-type 17 zinc finger occupies 2618 to 2641; the sequence is KRCPFCRALFKAKSALESHIRSRH. Disordered stretches follow at residues 2704 to 2788 and 2820 to 2875; these read EMSP…PKPL and FSEK…PGHK. 2 stretches are compositionally biased toward polar residues: residues 2709-2718 and 2746-2773; these read NLLSPSSFKA and TSSINTAISDATTGDEGNNEMESTTGSS. Basic and acidic residues predominate over residues 2820–2829; sequence FSEKDGDHDQ. The segment at residues 2874–2933 is a DNA-binding region (homeobox 4); the sequence is HKRFRTQMSNLQLKVLKACFSDYRTPTMQECEMLGNEIGLPKRVVQVWFQNARAKEKKFK. Residues 2952-2976 form a C2H2-type 18; degenerate zinc finger; it reads PECSLCGVKYSARLSIRDHIFSKQH. Disordered stretches follow at residues 3060 to 3174 and 3287 to 3343; these read PSSL…KHLK and LQKQ…LDSK. A compositionally biased stretch (low complexity) spans 3084 to 3104; it reads PTSATSSPALSLSSAPSKPLL. Residues 3105 to 3129 show a composition bias toward pro residues; it reads QTPPPPPPPPPPPPPPPPPPPPPPS. A compositionally biased stretch (basic and acidic residues) spans 3159-3174; that stretch reads IKEEELEANKPEKHLK. The stretch at 3271 to 3316 forms a coiled coil; it reads ALLQQYQQYQQNLQDSLQKQQKQQQEQQQKQVQAKSSKAENDQQQN. The segment covering 3287-3305 has biased composition (low complexity); the sequence is LQKQQKQQQEQQQKQVQAK. Residues 3321-3343 are compositionally biased toward basic and acidic residues; the sequence is SETKEDRSSATESTKEEPQLDSK. The segment at 3360-3384 adopts a C2H2-type 19; degenerate zinc-finger fold; the sequence is FICRKCQMMFTDEDAAVNHQKSFCY. The C2H2-type 20 zinc-finger motif lies at 3404–3428; the sequence is YQCLACDVAISGNEALSQHLQSSLH. Disordered regions lie at residues 3449–3468 and 3518–3543; these read HSVCSPNPNTTSTSQSAASS and TSGVQTSLPTESCSDESDSELSQKLE. Over residues 3453–3468 the composition is skewed to low complexity; the sequence is SPNPNTTSTSQSAASS.

Belongs to the krueppel C2H2-type zinc-finger protein family.

Its subcellular location is the nucleus. Functionally, may play a role in neural and muscle differentiation. May be involved in transcriptional regulation. This Gallus gallus (Chicken) protein is Zinc finger homeobox protein 4 (ZFHX4).